Consider the following 1416-residue polypeptide: Phospholipid-transporting ATPase VD (1416 aa).

Over 1–97 (MTELLQWARH…PRNLFEQFHR (97 aa)) the chain is Cytoplasmic. The helical transmembrane segment at 98-118 (AANLYFLFLVVLNWVPLVEAF) threads the bilayer. The Exoplasmic loop portion of the chain corresponds to 119–120 (QK). The chain crosses the membrane as a helical span at residues 121 to 141 (EITMLPLVVVLTIIAIKDGLE). The Cytoplasmic segment spans residues 142–321 (DYRKYKIDKQ…SKLERRANTD (180 aa)). Residues 322–342 (VLWCVLLLIVMCLTGALGHGI) form a helical membrane-spanning segment. The Exoplasmic loop segment spans residues 343 to 365 (WLSRYENMLFFNIPEPDGRVISP). Residues 366-386 (VLTGFYVFWTMIILLQVLIPI) traverse the membrane as a helical segment. Topologically, residues 387–1110 (SLYVSIEIVK…HWCYTRLSNM (724 aa)) are cytoplasmic. D438 (4-aspartylphosphate intermediate) is an active-site residue. Residues D438, K439, and T440 each coordinate ATP. Position 438 (D438) interacts with Mg(2+). T440 is a binding site for Mg(2+). Residues 498–544 (AQGCRTVPSGPLGKPSAQLSGSTSAVGNGEGSGEVPHSRQAAFSSPM) are disordered. Over residues 514–523 (AQLSGSTSAV) the composition is skewed to polar residues. ATP-binding residues include E729, F771, K795, R838, T918, G919, and D920. A disordered region spans residues 971-990 (PELASSRKNFPQPSDAQGQG). A compositionally biased stretch (polar residues) spans 976–987 (SRKNFPQPSDAQ). ATP is bound by residues 993–1000 (GLVITGKT), R1027, and K1033. D1053 contacts Mg(2+). Positions 1056 and 1057 each coordinate ATP. D1057 contacts Mg(2+). Residues 1111 to 1131 (ILYFFYKNVAYVNLLFWYQFF) traverse the membrane as a helical segment. Over 1132 to 1142 (CGFSGTSMTDY) the chain is Exoplasmic loop. A helical membrane pass occupies residues 1143–1163 (WVLIFFNLLFTSVPPIIYGVL). At 1164–1192 (EKDVSAETLLQLPELYRSGQRSEEYLPLT) the chain is on the cytoplasmic side. A helical transmembrane segment spans residues 1193–1213 (FWITLLDAFYQSLVCFFVPYF). Residues 1214–1221 (TYQGSDID) lie on the Exoplasmic loop side of the membrane. A helical transmembrane segment spans residues 1222 to 1242 (IFTFGNPLNTAALFIILLHLV). The Cytoplasmic segment spans residues 1243-1252 (IESKSLTWIH). A helical transmembrane segment spans residues 1253–1273 (MLVTVGSILSYFFFALAFGAL). Topologically, residues 1274 to 1289 (CVTCNPPSNPYGIMRK) are exoplasmic loop. The chain crosses the membrane as a helical span at residues 1290 to 1310 (HMLDPVFYLVCVLTTFVALLP). The Cytoplasmic segment spans residues 1311–1416 (RFLYRVLQGS…ASKMTGSSAS (106 aa)). Residues 1358-1416 (SKHASQSAAMSGRPTPGSSAVLAMKSATVSTVEQSTRETALDRGCSEPGASKMTGSSAS) form a disordered region. 1361-1368 (ASQSAAMS) provides a ligand contact to ATP. The span at 1392–1402 (STRETALDRGC) shows a compositional bias: basic and acidic residues.

This sequence belongs to the cation transport ATPase (P-type) (TC 3.A.3) family. Type IV subfamily. As to quaternary structure, component of a P4-ATPase flippase complex which consists of a catalytic alpha subunit ATP10A and an accessory beta subunit TMEM30A. It depends on Mg(2+) as a cofactor. Autophosphorylated at the conserved aspartate of the P-type ATPase signature sequence. In terms of tissue distribution, expressed at low amounts in liver, brain, testes, and kidney (at protein level). Expressed in placenta.

The protein localises to the cell membrane. It is found in the endoplasmic reticulum membrane. It carries out the reaction ATP + H2O + phospholipidSide 1 = ADP + phosphate + phospholipidSide 2.. The enzyme catalyses a beta-D-glucosyl-(1&lt;-&gt;1')-N-acylsphing-4-enine(out) + ATP + H2O = a beta-D-glucosyl-(1&lt;-&gt;1')-N-acylsphing-4-enine(in) + ADP + phosphate + H(+). In terms of biological role, catalytic component of a P4-ATPase flippase complex, which catalyzes the hydrolysis of ATP coupled to the transport of glucosylceramide (GlcCer) from the outer to the inner leaflet of the plasma membrane. The sequence is that of Phospholipid-transporting ATPase VD (Atp10d) from Mus musculus (Mouse).